A 556-amino-acid chain; its full sequence is Formate--tetrahydrofolate ligase (556 aa).

ATP is bound at residue 65 to 72; the sequence is TPAGEGKT.

The protein belongs to the formate--tetrahydrofolate ligase family.

The enzyme catalyses (6S)-5,6,7,8-tetrahydrofolate + formate + ATP = (6R)-10-formyltetrahydrofolate + ADP + phosphate. Its pathway is one-carbon metabolism; tetrahydrofolate interconversion. This Symbiobacterium thermophilum (strain DSM 24528 / JCM 14929 / IAM 14863 / T) protein is Formate--tetrahydrofolate ligase.